Consider the following 608-residue polypeptide: Threonine--tRNA ligase (608 aa).

The segment at 1 to 143 (MRVLYIHAER…VFKPEEAKTE (143 aa)) is editing domain. 2 catalytic regions span residues 194-490 (PKYL…PRLP) and 195-490 (KYLD…PRLP). The Zn(2+) site is built by Cys287, His338, and His459.

It belongs to the class-II aminoacyl-tRNA synthetase family. As to quaternary structure, homodimer. Requires Zn(2+) as cofactor.

Its subcellular location is the cytoplasm. It carries out the reaction tRNA(Thr) + L-threonine + ATP = L-threonyl-tRNA(Thr) + AMP + diphosphate + H(+). Its function is as follows. Catalyzes the attachment of threonine to tRNA(Thr) in a two-step reaction: L-threonine is first activated by ATP to form Thr-AMP and then transferred to the acceptor end of tRNA(Thr). Also edits incorrectly charged L-seryl-tRNA(Thr). The chain is Threonine--tRNA ligase from Pyrobaculum arsenaticum (strain DSM 13514 / JCM 11321 / PZ6).